The primary structure comprises 338 residues: RNA 3'-terminal phosphate cyclase (338 aa).

ATP contacts are provided by residues Q103 and 283-287 (YLADQ). The active-site Tele-AMP-histidine intermediate is H308.

The protein belongs to the RNA 3'-terminal cyclase family. Type 1 subfamily.

Its subcellular location is the cytoplasm. It carries out the reaction a 3'-end 3'-phospho-ribonucleotide-RNA + ATP = a 3'-end 2',3'-cyclophospho-ribonucleotide-RNA + AMP + diphosphate. Catalyzes the conversion of 3'-phosphate to a 2',3'-cyclic phosphodiester at the end of RNA. The mechanism of action of the enzyme occurs in 3 steps: (A) adenylation of the enzyme by ATP; (B) transfer of adenylate to an RNA-N3'P to produce RNA-N3'PP5'A; (C) and attack of the adjacent 2'-hydroxyl on the 3'-phosphorus in the diester linkage to produce the cyclic end product. The biological role of this enzyme is unknown but it is likely to function in some aspects of cellular RNA processing. In Shigella boydii serotype 18 (strain CDC 3083-94 / BS512), this protein is RNA 3'-terminal phosphate cyclase.